A 375-amino-acid chain; its full sequence is Queuine tRNA-ribosyltransferase (375 aa).

Aspartate 90 acts as the Proton acceptor in catalysis. Substrate contacts are provided by residues 90 to 94, aspartate 144, glutamine 193, and glycine 220; that span reads DSGGF. The RNA binding stretch occupies residues 251–257; the sequence is GVGTPED. The Nucleophile role is filled by aspartate 270. Residues 275–279 are RNA binding; important for wobble base 34 recognition; sequence TRNAR. Residues cysteine 308, cysteine 310, cysteine 313, and histidine 339 each contribute to the Zn(2+) site.

Belongs to the queuine tRNA-ribosyltransferase family. As to quaternary structure, homodimer. Within each dimer, one monomer is responsible for RNA recognition and catalysis, while the other monomer binds to the replacement base PreQ1. Zn(2+) serves as cofactor.

It catalyses the reaction 7-aminomethyl-7-carbaguanine + guanosine(34) in tRNA = 7-aminomethyl-7-carbaguanosine(34) in tRNA + guanine. Its pathway is tRNA modification; tRNA-queuosine biosynthesis. In terms of biological role, catalyzes the base-exchange of a guanine (G) residue with the queuine precursor 7-aminomethyl-7-deazaguanine (PreQ1) at position 34 (anticodon wobble position) in tRNAs with GU(N) anticodons (tRNA-Asp, -Asn, -His and -Tyr). Catalysis occurs through a double-displacement mechanism. The nucleophile active site attacks the C1' of nucleotide 34 to detach the guanine base from the RNA, forming a covalent enzyme-RNA intermediate. The proton acceptor active site deprotonates the incoming PreQ1, allowing a nucleophilic attack on the C1' of the ribose to form the product. After dissociation, two additional enzymatic reactions on the tRNA convert PreQ1 to queuine (Q), resulting in the hypermodified nucleoside queuosine (7-(((4,5-cis-dihydroxy-2-cyclopenten-1-yl)amino)methyl)-7-deazaguanosine). This chain is Queuine tRNA-ribosyltransferase, found in Herminiimonas arsenicoxydans.